A 200-amino-acid chain; its full sequence is Large ribosomal subunit protein uL4 (200 aa).

The segment at 42–65 (TRAQKTRSEVSGGGAKPWRQKGTG) is disordered.

This sequence belongs to the universal ribosomal protein uL4 family. Part of the 50S ribosomal subunit.

Its function is as follows. One of the primary rRNA binding proteins, this protein initially binds near the 5'-end of the 23S rRNA. It is important during the early stages of 50S assembly. It makes multiple contacts with different domains of the 23S rRNA in the assembled 50S subunit and ribosome. Functionally, forms part of the polypeptide exit tunnel. This is Large ribosomal subunit protein uL4 from Aliivibrio fischeri (strain MJ11) (Vibrio fischeri).